Here is a 384-residue protein sequence, read N- to C-terminus: Substance-K receptor (384 aa).

Residues 1–32 lie on the Extracellular side of the membrane; that stretch reads MGGRAIVTDTNIFSGLESNTTGVTAFSMPAWQ. N-linked (GlcNAc...) asparagine glycosylation is present at Asn19. The chain crosses the membrane as a helical span at residues 33-56; it reads LALWATAYLGLVLVAVTGNATVIW. At 57 to 69 the chain is on the cytoplasmic side; that stretch reads IILAHERMRTVTN. The chain crosses the membrane as a helical span at residues 70-90; it reads YFIINLALADLCMAAFNATFN. Residues 91 to 107 are Extracellular-facing; the sequence is FVYASHNIWYFGRAFCY. A disulfide bridge links Cys106 with Cys181. Residues 108–129 traverse the membrane as a helical segment; sequence FQNLFPITAMFVSIYSMTAIAA. The Cytoplasmic portion of the chain corresponds to 130–149; the sequence is DRYMAIVHPFQPRLSAPITK. Residues 150–170 form a helical membrane-spanning segment; that stretch reads ATIAGIWLVALALASPQCFYS. At 171-196 the chain is on the extracellular side; the sequence is TITVDQGATKCVVAWPNDNGGKMLLL. The helical transmembrane segment at 197 to 218 threads the bilayer; the sequence is YHLVVFVLVYFLPLVVMFVAYS. The Cytoplasmic portion of the chain corresponds to 219–251; the sequence is VIGLTLWKRAVPRHQAHGANLRHLHAKKKFVKA. The helical transmembrane segment at 252–272 threads the bilayer; it reads MVLVVLTFAICWLPYHLYFIL. The Extracellular portion of the chain corresponds to 273–290; it reads GSFQKDIYYRKFIQQVYL. A helical membrane pass occupies residues 291 to 310; sequence ALFWLAMSSTMYNPIIYCCL. The Cytoplasmic portion of the chain corresponds to 311–384; that stretch reads NHRFRSGFRL…SPQDVEPAAP (74 aa). Cys324 carries the S-palmitoyl cysteine lipid modification.

The protein belongs to the G-protein coupled receptor 1 family.

The protein resides in the cell membrane. Functionally, this is a receptor for the tachykinin neuropeptide substance K (neurokinin A). It is associated with G proteins that activate a phosphatidylinositol-calcium second messenger system. The rank order of affinity of this receptor to tachykinins is: substance K &gt; neuromedin-K &gt; substance P. This Mesocricetus auratus (Golden hamster) protein is Substance-K receptor (TACR2).